The sequence spans 227 residues: Urease accessory protein UreG (227 aa).

Residues 1–10 (MHLDHAHTHD) show a composition bias toward basic and acidic residues. The disordered stretch occupies residues 1–22 (MHLDHAHTHDGPSAVSADAHRP). GTP is bound at residue 35 to 42 (GPVGSGKT).

The protein belongs to the SIMIBI class G3E GTPase family. UreG subfamily. As to quaternary structure, homodimer. UreD, UreF and UreG form a complex that acts as a GTP-hydrolysis-dependent molecular chaperone, activating the urease apoprotein by helping to assemble the nickel containing metallocenter of UreC. The UreE protein probably delivers the nickel.

It localises to the cytoplasm. In terms of biological role, facilitates the functional incorporation of the urease nickel metallocenter. This process requires GTP hydrolysis, probably effectuated by UreG. The sequence is that of Urease accessory protein UreG from Streptomyces avermitilis (strain ATCC 31267 / DSM 46492 / JCM 5070 / NBRC 14893 / NCIMB 12804 / NRRL 8165 / MA-4680).